Consider the following 230-residue polypeptide: C-methyltransferase CouO (230 aa).

Belongs to the methyltransferase superfamily.

It participates in antibiotic biosynthesis. In terms of biological role, mediates C-methylation at the 8-position of the aminocoumarin moieties in coumermycin A1 in the biosynthetic pathway of coumermycin antibiotic. Active on both mono- and bis-amides for mono- and di-C-methylation adjacent to the phenolic hydroxyl before it is glycosylated by CouM. In Streptomyces rishiriensis, this protein is C-methyltransferase CouO (couO).